Consider the following 85-residue polypeptide: Large ribosomal subunit protein bL27 (85 aa).

Residues 1 to 20 (MATKKAGGSTRNGRDSEAKR) form a disordered region.

It belongs to the bacterial ribosomal protein bL27 family.

The polypeptide is Large ribosomal subunit protein bL27 (Actinobacillus pleuropneumoniae serotype 5b (strain L20)).